We begin with the raw amino-acid sequence, 621 residues long: NADPH-dependent diflavin oxidoreductase 1 (621 aa).

The Flavodoxin-like domain occupies 6–168; that stretch reads IAVLYGSETG…VYFEFEKRII (163 aa). Residues 12-17, 59-62, 106-115, and Glu-142 contribute to the FMN site; these read SETGNA, STTG, and LGDSSYPKFN. Residues 224 to 489 enclose the FAD-binding FR-type domain; the sequence is KLIKTGTITL…VGPGVGLAPL (266 aa). Residues Arg-381, 411–414, and 443–446 each bind FAD; these read RLYS and GVCT. NADP(+) contacts are provided by residues 536–537 and 545–549; these read SR and TKYVQ. Position 621 (Trp-621) interacts with FAD.

It belongs to the NADPH-dependent diflavin oxidoreductase NDOR1 family. In the N-terminal section; belongs to the flavodoxin family. The protein in the C-terminal section; belongs to the flavoprotein pyridine nucleotide cytochrome reductase family. In terms of assembly, interacts with DRE2; as part of the cytosolic iron-sulfur (Fe-S) protein assembly (CIA) machinery. It depends on FAD as a cofactor. Requires FMN as cofactor.

It is found in the cytoplasm. The protein resides in the mitochondrion. It carries out the reaction 2 oxidized [2Fe-2S]-[protein] + NADPH = 2 reduced [2Fe-2S]-[protein] + NADP(+) + H(+). NADPH-dependent reductase which is a central component of the cytosolic iron-sulfur (Fe-S) protein assembly (CIA) machinery. Transfers electrons from NADPH via its FAD and FMN prosthetic groups to the [2Fe-2S] cluster of DRE2, another key component of the CIA machinery. In turn, this reduced cluster provides electrons for assembly of cytosolic iron-sulfur cluster proteins. Positively controls H(2)O(2)-induced cell death. The sequence is that of NADPH-dependent diflavin oxidoreductase 1 from Candida glabrata (strain ATCC 2001 / BCRC 20586 / JCM 3761 / NBRC 0622 / NRRL Y-65 / CBS 138) (Yeast).